The sequence spans 151 residues: uncharacterized protein (151 aa).

Positions 40–57 are enriched in polar residues; it reads QMNRRNSENNTFDASNVG. The disordered stretch occupies residues 40–125; sequence QMNRRNSENN…KRQPHYAEPI (86 aa). Low complexity predominate over residues 83-110; the sequence is QRQNGRQHQHAGQQQPQHQHTQSQTRQT.

This is an uncharacterized protein from Bacillus subtilis (strain 168).